We begin with the raw amino-acid sequence, 464 residues long: Citrate synthase, mitochondrial (464 aa).

The transit peptide at 1-27 (MALLTAAARLFGAKNASCLVLAARHAS) directs the protein to the mitochondrion. The SIFI-degron signature appears at 2-21 (ALLTAAARLFGAKNASCLVL). K76 is subject to N6-acetyllysine; alternate. K76 carries the post-translational modification N6-succinyllysine; alternate. An N6-succinyllysine mark is found at K103 and K193. At S226 the chain carries Phosphoserine. The active site involves H301. An N6-acetyllysine; alternate mark is found at K321 and K327. An N6-succinyllysine; alternate mark is found at K321 and K327. Residue H347 is part of the active site. R356 is an oxaloacetate binding site. N6-acetyllysine; alternate is present on K375. Position 375 is an N6-succinyllysine; alternate (K375). The residue at position 382 (K382) is an N6-acetyllysine. N6-acetyllysine; alternate is present on K393. The residue at position 393 (K393) is an N6-succinyllysine; alternate. K395 bears the N6,N6,N6-trimethyllysine mark. D402 is an active-site residue. The oxaloacetate site is built by R428 and R448. At K450 the chain carries N6-succinyllysine. N6-acetyllysine; alternate is present on K459. Position 459 is an N6-succinyllysine; alternate (K459).

Belongs to the citrate synthase family. Homodimer. In terms of processing, methylated. Trimethylation at Lys-395 by CSKMT decreases citrate synthase activity. In response to mitochondrial stress, the precursor protein is ubiquitinated by the SIFI complex in the cytoplasm before mitochondrial import, leading to its degradation. Within the SIFI complex, UBR4 initiates ubiquitin chain that are further elongated or branched by KCMF1.

It is found in the mitochondrion matrix. The catalysed reaction is oxaloacetate + acetyl-CoA + H2O = citrate + CoA + H(+). The protein operates within carbohydrate metabolism; tricarboxylic acid cycle; isocitrate from oxaloacetate: step 1/2. In terms of biological role, key enzyme of the Krebs tricarboxylic acid cycle which catalyzes the synthesis of citrate from acetyl coenzyme A and oxaloacetate. The polypeptide is Citrate synthase, mitochondrial (CS) (Sus scrofa (Pig)).